The primary structure comprises 146 residues: Large ribosomal subunit protein uL15 (146 aa).

The segment at 1–54 is disordered; that stretch reads MKLHELQPAAGSRKAPKRVGRGTGSGLGRNAGKGEKGQNARSGGGVRPGFEGGQ. 2 stretches are compositionally biased toward gly residues: residues 21–31 and 42–52; these read RGTGSGLGRNA and SGGGVRPGFEG.

The protein belongs to the universal ribosomal protein uL15 family. In terms of assembly, part of the 50S ribosomal subunit.

Binds to the 23S rRNA. The chain is Large ribosomal subunit protein uL15 from Clostridium botulinum (strain Eklund 17B / Type B).